The sequence spans 356 residues: Histidinol-phosphate aminotransferase (356 aa).

K214 is modified (N6-(pyridoxal phosphate)lysine).

The protein belongs to the class-II pyridoxal-phosphate-dependent aminotransferase family. Histidinol-phosphate aminotransferase subfamily. In terms of assembly, homodimer. Pyridoxal 5'-phosphate serves as cofactor.

The enzyme catalyses L-histidinol phosphate + 2-oxoglutarate = 3-(imidazol-4-yl)-2-oxopropyl phosphate + L-glutamate. Its pathway is amino-acid biosynthesis; L-histidine biosynthesis; L-histidine from 5-phospho-alpha-D-ribose 1-diphosphate: step 7/9. The polypeptide is Histidinol-phosphate aminotransferase (Shigella flexneri serotype 5b (strain 8401)).